The primary structure comprises 127 residues: Aspartate 1-decarboxylase (127 aa).

Ser-25 (schiff-base intermediate with substrate; via pyruvic acid) is an active-site residue. Ser-25 is modified (pyruvic acid (Ser)). Thr-57 lines the substrate pocket. Catalysis depends on Tyr-58, which acts as the Proton donor. 73-75 provides a ligand contact to substrate; sequence GAA.

Belongs to the PanD family. Heterooctamer of four alpha and four beta subunits. It depends on pyruvate as a cofactor. In terms of processing, is synthesized initially as an inactive proenzyme, which is activated by self-cleavage at a specific serine bond to produce a beta-subunit with a hydroxyl group at its C-terminus and an alpha-subunit with a pyruvoyl group at its N-terminus.

The protein resides in the cytoplasm. The catalysed reaction is L-aspartate + H(+) = beta-alanine + CO2. It functions in the pathway cofactor biosynthesis; (R)-pantothenate biosynthesis; beta-alanine from L-aspartate: step 1/1. Functionally, catalyzes the pyruvoyl-dependent decarboxylation of aspartate to produce beta-alanine. The chain is Aspartate 1-decarboxylase from Bacillus subtilis (strain 168).